Consider the following 285-residue polypeptide: GTP-binding protein 8 (285 aa).

The EngB-type G domain occupies Arg110–Ser283. Residues Gly118 to Ser125, Gly147 to Lys151, Asp165 to Gly168, Thr227 to Asp230, and Ile262 to Ala264 each bind GTP. Mg(2+) is bound by residues Ser125 and Thr149.

The protein belongs to the TRAFAC class TrmE-Era-EngA-EngB-Septin-like GTPase superfamily. EngB GTPase family. Mg(2+) serves as cofactor.

The polypeptide is GTP-binding protein 8 (Gtpbp8) (Rattus norvegicus (Rat)).